Consider the following 291-residue polypeptide: uncharacterized protein (291 aa).

3 Solcar repeats span residues 15 to 93, 104 to 190, and 201 to 287; these read PGPV…IKKS, PRTV…IKQS, and LSTV…VMEI. 6 consecutive transmembrane segments (helical) span residues 21 to 41, 70 to 90, 108 to 128, 169 to 189, 201 to 221, and 259 to 280; these read IIAG…AEFA, STVI…FDSI, LAGL…FESI, TVAR…SIKQ, LSTV…VYCT, and FWSG…VFTV.

Belongs to the mitochondrial carrier (TC 2.A.29) family.

Its subcellular location is the mitochondrion inner membrane. This is an uncharacterized protein from Schizosaccharomyces pombe (strain 972 / ATCC 24843) (Fission yeast).